We begin with the raw amino-acid sequence, 348 residues long: Fasciculation and elongation protein zeta-2 (348 aa).

The interval 11–40 (YEFQEPAGSVQEQENCNASPEAGAGAHAGG) is disordered. Residues Ser130, Ser171, and Ser190 each carry the phosphoserine modification. A coiled-coil region spans residues 206 to 280 (ERVKRLSVSE…TAKKKKKLKS (75 aa)). The interval 265–296 (QKEHKETAKKKKKLKSGSSQNGRSERSHMPGT) is disordered.

The protein belongs to the zygin family. Homodimer; disulfide-linked. May form heterodimers with FEZ1. Interacts with synaptotagmin.

Involved in axonal outgrowth and fasciculation. This is Fasciculation and elongation protein zeta-2 (Fez2) from Mus musculus (Mouse).